Reading from the N-terminus, the 345-residue chain is Dihydroorotate dehydrogenase (quinone) (345 aa).

FMN-binding positions include 65 to 69 and Thr-89; that span reads AGLDK. Lys-69 is a substrate binding site. Residue 114–118 participates in substrate binding; sequence NRLGF. FMN contacts are provided by Asn-146 and Asn-179. Asn-179 contributes to the substrate binding site. Ser-182 functions as the Nucleophile in the catalytic mechanism. Position 184 (Asn-184) interacts with substrate. FMN-binding residues include Lys-224 and Thr-252. 253-254 is a binding site for substrate; that stretch reads NT. FMN-binding positions include Gly-275, Gly-304, and 325–326; that span reads YT.

This sequence belongs to the dihydroorotate dehydrogenase family. Type 2 subfamily. Monomer. Requires FMN as cofactor.

It localises to the cell membrane. It carries out the reaction (S)-dihydroorotate + a quinone = orotate + a quinol. Its pathway is pyrimidine metabolism; UMP biosynthesis via de novo pathway; orotate from (S)-dihydroorotate (quinone route): step 1/1. Functionally, catalyzes the conversion of dihydroorotate to orotate with quinone as electron acceptor. The protein is Dihydroorotate dehydrogenase (quinone) of Leptothrix cholodnii (strain ATCC 51168 / LMG 8142 / SP-6) (Leptothrix discophora (strain SP-6)).